The chain runs to 38 residues: Photosystem I reaction center subunit IX (38 aa).

A helical transmembrane segment spans residues 4-24 (FLTAAPVVAAIWFTATAGILI).

The protein belongs to the PsaJ family.

The protein localises to the cellular thylakoid membrane. Functionally, may help in the organization of the PsaE and PsaF subunits. This Synechococcus sp. (strain CC9605) protein is Photosystem I reaction center subunit IX.